Reading from the N-terminus, the 129-residue chain is uncharacterized protein (129 aa).

It to M.pneumoniae MPN_376 N-terminal region.

This is an uncharacterized protein from Mycoplasma pneumoniae (strain ATCC 29342 / M129 / Subtype 1) (Mycoplasmoides pneumoniae).